The primary structure comprises 277 residues: 3-methyl-2-oxobutanoate hydroxymethyltransferase (277 aa).

The Mg(2+) site is built by D43 and D82. 3-methyl-2-oxobutanoate contacts are provided by residues 43–44, D82, and K112; that span reads DS. E114 provides a ligand contact to Mg(2+). E181 (proton acceptor) is an active-site residue.

This sequence belongs to the PanB family. In terms of assembly, homodecamer; pentamer of dimers. The cofactor is Mg(2+).

The protein resides in the cytoplasm. The catalysed reaction is 3-methyl-2-oxobutanoate + (6R)-5,10-methylene-5,6,7,8-tetrahydrofolate + H2O = 2-dehydropantoate + (6S)-5,6,7,8-tetrahydrofolate. The protein operates within cofactor biosynthesis; (R)-pantothenate biosynthesis; (R)-pantoate from 3-methyl-2-oxobutanoate: step 1/2. In terms of biological role, catalyzes the reversible reaction in which hydroxymethyl group from 5,10-methylenetetrahydrofolate is transferred onto alpha-ketoisovalerate to form ketopantoate. The polypeptide is 3-methyl-2-oxobutanoate hydroxymethyltransferase (Listeria innocua serovar 6a (strain ATCC BAA-680 / CLIP 11262)).